The chain runs to 606 residues: NADH-ubiquinone oxidoreductase chain 5 (606 aa).

Helical transmembrane passes span 1–21, 43–63, 87–107, 117–137, 140–160, 171–191, 241–261, 273–293, 310–330, 365–385, 409–429, 457–477, 488–508, and 582–602; these read MNMF…PIIM, AFMI…ETII, MIFV…SMWY, FFKY…ANNM, LFIG…WWYG, AVLY…WFLL, TPVS…FLLI, IQTL…ICAL, LGLM…LHIC, VLPF…GMPF, LLIT…IMFF, LLIG…PTTI, MTAL…NLTT, and GLIK…LLIL.

It belongs to the complex I subunit 5 family. In terms of assembly, core subunit of respiratory chain NADH dehydrogenase (Complex I) which is composed of 45 different subunits.

Its subcellular location is the mitochondrion inner membrane. The catalysed reaction is a ubiquinone + NADH + 5 H(+)(in) = a ubiquinol + NAD(+) + 4 H(+)(out). Functionally, core subunit of the mitochondrial membrane respiratory chain NADH dehydrogenase (Complex I) which catalyzes electron transfer from NADH through the respiratory chain, using ubiquinone as an electron acceptor. Essential for the catalytic activity and assembly of complex I. The polypeptide is NADH-ubiquinone oxidoreductase chain 5 (MT-ND5) (Canis lupus (Gray wolf)).